A 558-amino-acid chain; its full sequence is Methionine--tRNA ligase 1 (558 aa).

The 'HIGH' region motif lies at 10–20 (PYINGIKHLGN). Zn(2+) contacts are provided by Cys-142, Cys-145, Cys-155, and Cys-158. The short motif at 332 to 336 (KFSTS) is the 'KMSKS' region element. Residue Thr-335 participates in ATP binding.

The protein belongs to the class-I aminoacyl-tRNA synthetase family. MetG type 1 subfamily. In terms of assembly, monomer. Zn(2+) is required as a cofactor.

The protein localises to the cytoplasm. It carries out the reaction tRNA(Met) + L-methionine + ATP = L-methionyl-tRNA(Met) + AMP + diphosphate. Its function is as follows. Is required not only for elongation of protein synthesis but also for the initiation of all mRNA translation through initiator tRNA(fMet) aminoacylation. In Acaryochloris marina (strain MBIC 11017), this protein is Methionine--tRNA ligase 1.